The following is a 244-amino-acid chain: Probable ABC transporter ATP-binding protein p29 (244 aa).

The 236-residue stretch at 6–241 (LVFDQVSLRY…KLTKQKLMQI (236 aa)) folds into the ABC transporter domain. An ATP-binding site is contributed by 38–45 (GKSGVGKT).

It belongs to the ABC transporter superfamily.

In terms of biological role, part of a high-affinity transport system. The protein is Probable ABC transporter ATP-binding protein p29 (p29) of Mycoplasma pneumoniae (strain ATCC 29342 / M129 / Subtype 1) (Mycoplasmoides pneumoniae).